Reading from the N-terminus, the 458-residue chain is Elongation factor 1-alpha (458 aa).

Gly2 is subject to N,N,N-trimethylglycine. Lys3 is modified (N6,N6-dimethyllysine; alternate). N6-methyllysine; alternate is present on Lys3. In terms of domain architecture, tr-type G spans 5–240 (KTHVNVVVIG…DAIEPPVRPS (236 aa)). The interval 14 to 21 (GHVDSGKS) is G1. GTP is bound at residue 14–21 (GHVDSGKS). Lys30 bears the N6-methyllysine mark. The G2 stretch occupies residues 70–74 (GITID). At Lys79 the chain carries N6,N6,N6-trimethyllysine. Residues 91-94 (DAPG) form a G3 region. GTP is bound by residues 91–95 (DAPGH) and 153–156 (NKMD). A G4 region spans residues 153-156 (NKMD). Residues 192–194 (SGW) form a G5 region. At Lys316 the chain carries N6,N6-dimethyllysine; alternate. An N6-methyllysine; alternate modification is found at Lys316. Lys390 is modified (N6-methyllysine).

This sequence belongs to the TRAFAC class translation factor GTPase superfamily. Classic translation factor GTPase family. EF-Tu/EF-1A subfamily.

It is found in the cytoplasm. Functionally, this protein promotes the GTP-dependent binding of aminoacyl-tRNA to the A-site of ribosomes during protein biosynthesis. This is Elongation factor 1-alpha (TEF-2) from Mucor circinelloides f. lusitanicus (Mucor racemosus var. lusitanicus).